Reading from the N-terminus, the 463-residue chain is V-type ATP synthase beta chain (463 aa).

This sequence belongs to the ATPase alpha/beta chains family.

Produces ATP from ADP in the presence of a proton gradient across the membrane. The V-type beta chain is a regulatory subunit. The protein is V-type ATP synthase beta chain of Halothermothrix orenii (strain H 168 / OCM 544 / DSM 9562).